The primary structure comprises 158 residues: Small ribosomal subunit protein uS7 (158 aa).

Belongs to the universal ribosomal protein uS7 family. In terms of assembly, part of the 30S ribosomal subunit. Contacts proteins S9 and S11.

Its function is as follows. One of the primary rRNA binding proteins, it binds directly to 16S rRNA where it nucleates assembly of the head domain of the 30S subunit. Is located at the subunit interface close to the decoding center, probably blocks exit of the E-site tRNA. This is Small ribosomal subunit protein uS7 from Porphyromonas gingivalis (strain ATCC 33277 / DSM 20709 / CIP 103683 / JCM 12257 / NCTC 11834 / 2561).